The sequence spans 352 residues: Heat-inducible transcription repressor HrcA (352 aa).

It belongs to the HrcA family.

Negative regulator of class I heat shock genes (grpE-dnaK-dnaJ and groELS operons). Prevents heat-shock induction of these operons. The protein is Heat-inducible transcription repressor HrcA of Thermosynechococcus vestitus (strain NIES-2133 / IAM M-273 / BP-1).